The following is a 559-amino-acid chain: uncharacterized protein (559 aa).

2 disordered regions span residues 315–360 and 454–559; these read TDDA…ERDI and DKID…STEN. Residues 320-329 show a composition bias toward polar residues; that stretch reads NENSDNSMNT. Positions 348–357 are enriched in acidic residues; it reads DNNDDSDDSE. Positions 433–495 form a coiled coil; that stretch reads ELKIQEMEKI…KRRQKRSQRS (63 aa). The segment covering 454–501 has biased composition (basic and acidic residues); it reads DKIDMDQIKSEMSRRRDESNKRRDEKRKDREEKRRQKRSQRSDTRKQG. Residues 507-527 are compositionally biased toward low complexity; that stretch reads SDEATSDQTQSTDSNNTTQTA.

It is found in the virion. This is an uncharacterized protein from Acanthamoeba polyphaga mimivirus (APMV).